A 509-amino-acid polypeptide reads, in one-letter code: MELEAKLHEIKKPIMVLGTSSGAGKSLTVTAICRILKNLGEEPIPFKGQNMSNNAWVDWEGGEMAYSQALQAFACGINPAAEMNPILLKPQGNSISEVIHLGKSIGTTTAKNYYKDWFTPGWEVIKKSLKSIYEGNPNCRLIIEGAGSPVEMNLIHRDLTNLRVAKYLNANCILVTDIERGGVFAQIIGTLELMKPEEKKLIKGIIINRFRGDLSLFEDGKKWIENKTQIPVVGIIPWLNDSFPPEDSLDLIEKKSLSKNPEIKVGIIKLPSISNFSDFDPLENEETIFIEWIRKSQNLSKYDFIILPGSKQTIKDQIFLENSGLSKDIRDYSKNKGNIVGICGGLQMLGTTLEDPYFKEGSKNYSEQKIKGIGLLPLKTTFFKKKLTRQIKSKSIWPCQSEINGFEIHNGQTVLDEIQSSLKINPIFEDSDLGWYKENNKGGTIAGTYIHGIFENDSWREHYINLIRKSKNLPTLNKKSISYKEKRQFIIDNLANEFHKHLNLKSFLS.

One can recognise a GATase cobBQ-type domain in the interval 262–459 (EIKVGIIKLP…IHGIFENDSW (198 aa)). Cys-343 serves as the catalytic Nucleophile. The active site involves His-451.

The protein belongs to the CobB/CobQ family. CobQ subfamily.

It participates in cofactor biosynthesis; adenosylcobalamin biosynthesis. In terms of biological role, catalyzes amidations at positions B, D, E, and G on adenosylcobyrinic A,C-diamide. NH(2) groups are provided by glutamine, and one molecule of ATP is hydrogenolyzed for each amidation. This is Cobyric acid synthase from Prochlorococcus marinus (strain MIT 9301).